Here is a 460-residue protein sequence, read N- to C-terminus: Wadjet protein JetA (460 aa).

Its function is as follows. Component of antiplasmid transformation system Wadjet type I, composed of JetA, JetB, JetC and JetD. Expression of Wadjet type I in B.subtilis (strain BEST7003) reduces the transformation efficiency of plasmid pHCMC05. The polypeptide is Wadjet protein JetA (Bacillus cereus (strain Q1)).